A 502-amino-acid chain; its full sequence is ATP synthase subunit alpha, sodium ion specific (502 aa).

Position 169 to 176 (169 to 176 (GDRQTGKT)) interacts with ATP.

This sequence belongs to the ATPase alpha/beta chains family. In terms of assembly, F-type ATPases have 2 components, CF(1) - the catalytic core - and CF(0) - the membrane proton channel. CF(1) has five subunits: alpha(3), beta(3), gamma(1), delta(1), epsilon(1). CF(0) has three main subunits: a, b and c.

The protein resides in the cell membrane. It carries out the reaction 4 Na(+)(in) + ATP + H2O = 4 Na(+)(out) + ADP + phosphate + H(+). With respect to regulation, inhibited by nitrate. Produces ATP from ADP in the presence of a sodium ion gradient across the membrane. The alpha chain is a regulatory subunit. In Acetobacterium woodii (strain ATCC 29683 / DSM 1030 / JCM 2381 / KCTC 1655 / WB1), this protein is ATP synthase subunit alpha, sodium ion specific.